Here is a 187-residue protein sequence, read N- to C-terminus: Interferon beta (187 aa).

An N-terminal signal peptide occupies residues 1 to 21 (MTNKCLLQIALLLCFSTTALS). Position 24 is a phosphotyrosine (Tyr-24). A disulfide bond links Cys-52 and Cys-162. Residue Asn-101 is glycosylated (N-linked (GlcNAc...) asparagine).

Belongs to the alpha/beta interferon family. Monomer.

The protein localises to the secreted. Its function is as follows. Type I interferon cytokine that plays a key role in the innate immune response to infection, developing tumors and other inflammatory stimuli. Signals via binding to high-affinity (IFNAR2) and low-affinity (IFNAR1) heterodimeric receptor, activating the canonical Jak-STAT signaling pathway resulting in transcriptional activation or repression of interferon-regulated genes that encode the effectors of the interferon response, such as antiviral proteins, regulators of cell proliferation and differentiation, and immunoregulatory proteins. Signals mostly via binding to a IFNAR1-IFNAR2 heterodimeric receptor, but can also function with IFNAR1 alone and independently of Jak-STAT pathways. Elicits a wide variety of responses, including antiviral and antibacterial activities, and can regulate the development of B-cells, myelopoiesis and lipopolysaccharide (LPS)-inducible production of tumor necrosis factor. Plays a role in neuronal homeostasis by regulating dopamine turnover and protecting dopaminergic neurons: acts by promoting neuronal autophagy and alpha-synuclein clearance, thereby preventing dopaminergic neuron loss. IFNB1 is more potent than interferon-alpha (IFN-alpha) in inducing the apoptotic and antiproliferative pathways required for control of tumor cell growth. The chain is Interferon beta from Homo sapiens (Human).